The following is a 137-amino-acid chain: Ribonuclease P protein component (137 aa).

It belongs to the RnpA family. As to quaternary structure, consists of a catalytic RNA component (M1 or rnpB) and a protein subunit.

The catalysed reaction is Endonucleolytic cleavage of RNA, removing 5'-extranucleotides from tRNA precursor.. RNaseP catalyzes the removal of the 5'-leader sequence from pre-tRNA to produce the mature 5'-terminus. It can also cleave other RNA substrates such as 4.5S RNA. The protein component plays an auxiliary but essential role in vivo by binding to the 5'-leader sequence and broadening the substrate specificity of the ribozyme. In Porphyromonas gingivalis (strain ATCC BAA-308 / W83), this protein is Ribonuclease P protein component.